We begin with the raw amino-acid sequence, 295 residues long: Probable endonuclease 4 (295 aa).

9 residues coordinate Zn(2+): His78, His118, Glu154, Asp188, His191, His225, Asp238, His240, and Glu270.

It belongs to the AP endonuclease 2 family. Zn(2+) serves as cofactor.

It catalyses the reaction Endonucleolytic cleavage to 5'-phosphooligonucleotide end-products.. Endonuclease IV plays a role in DNA repair. It cleaves phosphodiester bonds at apurinic or apyrimidinic (AP) sites, generating a 3'-hydroxyl group and a 5'-terminal sugar phosphate. This Vibrio campbellii (strain ATCC BAA-1116) protein is Probable endonuclease 4.